The primary structure comprises 190 residues: Selenoprotein S (190 aa).

The span at 1-13 (MEAEDGARVRNED) shows a compositional bias: basic and acidic residues. Residues 1–20 (MEAEDGARVRNEDVPPQNQD) form a disordered region. A helical membrane pass occupies residues 30–50 (AFMSEYGWYLLFGCVGVYLLI). Positions 58-68 (SSTQTRSSSGS) are enriched in low complexity. Residues 58-190 (SSTQTRSSSG…RRGPSAGGUG (133 aa)) are disordered. Residues 79–120 (RRQEALEASRRRMQEEQDARAAEFREKQRMLEEEKRRQKIEM) show a composition bias toward basic and acidic residues. The span at 136-151 (VAQQNTEEAASSSSLR) shows a compositional bias: polar residues. Residue Sec-189 is a non-standard amino acid, selenocysteine.

Belongs to the selenoprotein S family.

It localises to the endoplasmic reticulum membrane. The protein localises to the cytoplasm. Involved in the degradation process of misfolded endoplasmic reticulum (ER) luminal proteins. Participates in the transfer of misfolded proteins from the ER to the cytosol, where they are destroyed by the proteasome in a ubiquitin-dependent manner. The sequence is that of Selenoprotein S (vimp) from Danio rerio (Zebrafish).